Consider the following 249-residue polypeptide: MKYLVDTHTHTIASTHAYSTLQEYIAMAKHKGIKLFATTDHGPDMADAPHFWHFVNLRVLPRVVDGVGILRGIEANIKNVVGEIDFFGDYLQDLDIVLAGFHEPVFAPSNKETHTAAMINCINSGHVDIITHPGNPAYPIDIEAVAKAAAENNVALEINNSSFLVSRKGSEHNCLAIAKAVKEAGGLLVMGSDSHVAYSLGDFTLAEQIVEQADFPIERLLNRSPEALLAFLSARGHASLDEYSVLLES.

Zn(2+)-binding residues include His-8, His-10, His-16, His-41, Glu-74, His-102, His-132, Asp-193, and His-195.

It belongs to the PHP family. The cofactor is Zn(2+).

The chain is Probable phosphatase Shal_1519 from Shewanella halifaxensis (strain HAW-EB4).